A 306-amino-acid polypeptide reads, in one-letter code: Lipid A biosynthesis palmitoleoyltransferase (306 aa).

The chain crosses the membrane as a helical span at residues 20–40 (WFGLGVLWLWVQLPYPVLCFL). An HXXXXD motif motif is present at residues 132–137 (HFMSLE).

It belongs to the LpxL/LpxM/LpxP family. LpxP subfamily.

The protein resides in the cell inner membrane. The catalysed reaction is (9Z)-hexadecenoyl-[ACP] + alpha-Kdo-(2-&gt;4)-alpha-Kdo-(2-&gt;6)-lipid IVA (E. coli) = (9Z)-hexadecenoyl-(Kdo)2-lipid IVA (E. coli) + holo-[ACP]. The protein operates within bacterial outer membrane biogenesis; lipopolysaccharide biosynthesis. Catalyzes the transfer of palmitoleate from palmitoleoyl-[acyl-carrier-protein] (ACP) to Kdo(2)-lipid IV(A) to form Kdo(2)-(palmitoleoyl)-lipid IV(A). Required for the biosynthesis of a distinct molecular species of lipid A, which is present only in cells grown at low temperatures. It may confer a selective advantage to cells growing at lower temperatures by making the outer membrane a more effective barrier to harmful chemicals. This Escherichia coli (strain K12) protein is Lipid A biosynthesis palmitoleoyltransferase.